The chain runs to 246 residues: Probable transcriptional regulatory protein HSM_1763 (246 aa).

The protein belongs to the TACO1 family.

It localises to the cytoplasm. This is Probable transcriptional regulatory protein HSM_1763 from Histophilus somni (strain 2336) (Haemophilus somnus).